We begin with the raw amino-acid sequence, 118 residues long: Large ribosomal subunit protein uL18 (118 aa).

The protein belongs to the universal ribosomal protein uL18 family. In terms of assembly, part of the 50S ribosomal subunit; part of the 5S rRNA/L5/L18/L25 subcomplex. Contacts the 5S and 23S rRNAs.

This is one of the proteins that bind and probably mediate the attachment of the 5S RNA into the large ribosomal subunit, where it forms part of the central protuberance. The chain is Large ribosomal subunit protein uL18 from Helicobacter pylori (strain J99 / ATCC 700824) (Campylobacter pylori J99).